The primary structure comprises 73 residues: Large ribosomal subunit protein bL31 (73 aa).

Belongs to the bacterial ribosomal protein bL31 family. Type A subfamily. In terms of assembly, part of the 50S ribosomal subunit.

In terms of biological role, binds the 23S rRNA. The polypeptide is Large ribosomal subunit protein bL31 (Bartonella bacilliformis (strain ATCC 35685 / KC583 / Herrer 020/F12,63)).